Reading from the N-terminus, the 299-residue chain is MLFNQIASNKRKTIVLLIVFFMLLAAIGAAVGYLWLDSLVGGMAIALIIGFIYAFSMIFQSTNIVMAMNNAKEITVDEMPDYYHIVEDMAMVAQIPMPRVYVIDDPSLNAFATGSSPQNAAVAATTGLLAIMNREELEGVIGHEVSHIRNYDIRISTIAVALASAVTLISSIGGRMMWFGGGRSRRSNDNEGGGYLQIILLIFSLLAIILAPLAASLVQLAISRQREYLADASSVELTRNPQGMIRALQKLEQSQPMAHSVDNASAALYINDPKKKSGLKHLFYTHPPIADRIRRLEQV.

2 helical membrane-spanning segments follow: residues 14–34 (IVLL…VGYL) and 39–59 (LVGG…SMIF). Zn(2+) is bound at residue His-143. Glu-144 is an active-site residue. His-147 is a binding site for Zn(2+). 2 consecutive transmembrane segments (helical) span residues 158-178 (IAVA…RMMW) and 198-218 (IILL…ASLV). Residue Glu-227 participates in Zn(2+) binding.

The protein belongs to the peptidase M48B family. Zn(2+) serves as cofactor.

The protein localises to the cell membrane. The protein is Protease HtpX homolog of Streptococcus mutans serotype c (strain ATCC 700610 / UA159).